The primary structure comprises 194 residues: Peptidyl-tRNA hydrolase (194 aa).

Y17 contacts tRNA. H22 acts as the Proton acceptor in catalysis. Positions 68, 70, and 116 each coordinate tRNA.

This sequence belongs to the PTH family. As to quaternary structure, monomer.

It is found in the cytoplasm. The enzyme catalyses an N-acyl-L-alpha-aminoacyl-tRNA + H2O = an N-acyl-L-amino acid + a tRNA + H(+). Hydrolyzes ribosome-free peptidyl-tRNAs (with 1 or more amino acids incorporated), which drop off the ribosome during protein synthesis, or as a result of ribosome stalling. Its function is as follows. Catalyzes the release of premature peptidyl moieties from peptidyl-tRNA molecules trapped in stalled 50S ribosomal subunits, and thus maintains levels of free tRNAs and 50S ribosomes. In Histophilus somni (strain 129Pt) (Haemophilus somnus), this protein is Peptidyl-tRNA hydrolase.